The sequence spans 86 residues: Large ribosomal subunit protein bL27 (86 aa).

Positions 1-22 are disordered; the sequence is MATKKAGGSSRNGRDSAGRRLG.

Belongs to the bacterial ribosomal protein bL27 family.

This is Large ribosomal subunit protein bL27 from Rickettsia peacockii (strain Rustic).